Reading from the N-terminus, the 192-residue chain is Protein hunchback (192 aa).

2 disordered regions span residues 16–54 and 152–192; these read SHHH…SNTN and LTPP…KYMA. Positions 17–28 are enriched in basic residues; it reads HHHHHHHAHHSH. Low complexity predominate over residues 32–41; the sequence is SNSNASSPHQ. Positions 173–192 are enriched in basic and acidic residues; the sequence is EPEKEHDLMSNSSEDMKYMA.

The protein belongs to the hunchback C2H2-type zinc-finger protein family.

Its subcellular location is the nucleus. Gap class segmentation protein that controls development of head structures. This chain is Protein hunchback (hb), found in Drosophila tanythrix (Fruit fly).